The sequence spans 590 residues: Probable lysosomal cobalamin transporter (590 aa).

10 helical membrane-spanning segments follow: residues 8–28 (LIWVVYAIVFFLLVAVSSIFI), 46–66 (IFTLTALLATVLLLPVDVALV), 94–114 (AVAYYFLYSLDAVLCLLVVPF), 145–165 (TVAFILLTVILFLVGFFVPIG), 190–210 (ALTFALGLLITIGILVYVLYT), 314–334 (LLSGLLLLAIAMLVWVSMLLT), 348–367 (CGYILGKTNILNPINWVFVH), 376–396 (YILFVFLVLVFFCSSVVGIAT), 421–441 (ITTVMLTLITLALNYSISMVV), and 508–528 (FFGIVDFWAQFFFLGLSLLVF). Residues 567–590 (WEDITGRASRSPQVSGSAGRGTRE) are disordered.

It belongs to the LIMR family. LMBRD1 subfamily.

It localises to the lysosome membrane. Functionally, probable lysosomal cobalamin transporter. Required to export cobalamin from lysosomes allowing its conversion to cofactors. This Ajellomyces capsulatus (strain NAm1 / WU24) (Darling's disease fungus) protein is Probable lysosomal cobalamin transporter.